The sequence spans 130 residues: C-C motif chemokine 28 (130 aa).

The first 16 residues, methionine 1 to alanine 16, serve as a signal peptide directing secretion. Disulfide bonds link cysteine 30-cysteine 58 and cysteine 31-cysteine 73. N-linked (GlcNAc...) asparagine glycosylation is present at asparagine 78. The interval lysine 92–arginine 130 is disordered. Over residues glutamine 104 to histidine 124 the composition is skewed to basic residues.

Belongs to the intercrine beta (chemokine CC) family. In terms of tissue distribution, mainly expressed in testis, epithelial cells of normal colon, kidney, Peyer patches, lymph nodes. Also found in lower levels in brain, spleen and lung.

It is found in the secreted. Its function is as follows. Chemotactic for resting CD4, CD8 T-cells and eosinophils. Binds to CCR10 and induces calcium mobilization in a dose-dependent manner. In Mus musculus (Mouse), this protein is C-C motif chemokine 28 (Ccl28).